Consider the following 205-residue polypeptide: 3-demethoxyubiquinol 3-hydroxylase (205 aa).

Fe cation contacts are provided by Glu-54, Glu-84, His-87, Glu-136, Glu-168, and His-171.

This sequence belongs to the COQ7 family. Fe cation serves as cofactor.

The protein localises to the cell membrane. It catalyses the reaction a 5-methoxy-2-methyl-3-(all-trans-polyprenyl)benzene-1,4-diol + AH2 + O2 = a 3-demethylubiquinol + A + H2O. The protein operates within cofactor biosynthesis; ubiquinone biosynthesis. Catalyzes the hydroxylation of 2-nonaprenyl-3-methyl-6-methoxy-1,4-benzoquinol during ubiquinone biosynthesis. This Delftia acidovorans (strain DSM 14801 / SPH-1) protein is 3-demethoxyubiquinol 3-hydroxylase.